A 387-amino-acid chain; its full sequence is MAGSEPRSGTNSPPPPFSDWGRLEAAILSGWKTFWQSVSKERVARTTSREEVDEAASTLTRLPIDVQLYILSFLSPHDLCQLGSTNHYWNETVRDPILWRYFLLRDLPSWSSVDWKSLPDLEILKKPISEVTDGAFFDYMAVYRMCCPYTRRASKSSRPMYGAVTSFLHSLIIQNEPRFAMFGPGLEELNTSLVLSLMSSEELCPTAGLPQRQIDGIGSGVNFQLNNQHKFNILILYSTTRKERDRAREEHTSAVNKMFSRHNEGDDQQGSRYSVIPQIQKVCEVVDGFIYVANAEAHKRHEWQDEFSHIMAMTDPAFGSSGRPLLVLSCISQGDVKRMPCFYLAHELHLNLLNHPWLVQDTEAETLTGFLNGIEWILEEVESKRAR.

Residues serine 12 and serine 48 each carry the phosphoserine modification. Positions alanine 56–phenylalanine 102 constitute an F-box domain.

Homodimer. Part of the SCF (SKP1-CUL1-F-box) E3 ubiquitin-protein ligase complex SCF(FBXO4) formed of CUL1, SKP1, RBX1 and FBXO4. Interacts with TERF1; this interaction is prevented in the presence of GNL3L. Identified in a complex with CRYAB and CCND1. In terms of processing, phosphorylation at Ser-12 varies during the cell cycle. It is low in resting cells and high in the S phase and the G2/M phase of the cell cycle. Phosphorylation is decreased during late G1 phase. Phosphorylation at Ser-12 promotes homodimerization and is necessary for optimal ubiquitin ligase activity towards CCND1.

The protein localises to the cytoplasm. The protein operates within protein modification; protein ubiquitination. Functionally, substrate recognition component of a SCF (SKP1-CUL1-F-box protein) E3 ubiquitin-protein ligase complex that mediates the ubiquitination and subsequent proteasomal degradation of target proteins. Promotes ubiquitination of cyclin-D1 (CCND1) and its subsequent proteasomal degradation. However, it does not act as a major regulator of CCND1 stability during the G1/S transition. Recognizes TERF1 and promotes its ubiquitination together with UBE2D1. Promotes ubiquitination of FXR1 following phosphorylation of FXR1 by GSK3B, leading to FXR1 degradation by the proteasome. The chain is F-box only protein 4 (FBXO4) from Homo sapiens (Human).